The primary structure comprises 222 residues: Voltage-dependent calcium channel gamma-1 subunit (222 aa).

Residues methionine 1–arginine 10 are Cytoplasmic-facing. Residues valine 11–serine 29 traverse the membrane as a helical segment. Topologically, residues aspartate 30–alanine 108 are extracellular. Residues asparagine 43 and asparagine 79 are each glycosylated (N-linked (GlcNAc...) asparagine). Residues cysteine 57 and cysteine 80 are joined by a disulfide bond. Residues alanine 109 to phenylalanine 129 form a helical membrane-spanning segment. Residues arginine 130 to aspartate 134 lie on the Cytoplasmic side of the membrane. The helical transmembrane segment at tyrosine 135 to leucine 155 threads the bilayer. Over glutamate 156–serine 179 the chain is Extracellular. The helical transmembrane segment at tryptophan 180–leucine 204 threads the bilayer. The Cytoplasmic segment spans residues proline 205 to histidine 222.

It belongs to the PMP-22/EMP/MP20 family. CACNG subfamily. As to quaternary structure, component of a calcium channel complex consisting of a pore-forming alpha subunit (CACNA1S) and the ancillary subunits CACNB1 or CACNB2, CACNG1 and CACNA2D1. The channel complex contains alpha, beta, gamma and delta subunits in a 1:1:1:1 ratio, i.e. it contains either CACNB1 or CACNB2. Post-translationally, N-glycosylated. In terms of tissue distribution, skeletal muscle (at protein level).

It localises to the cell membrane. It is found in the sarcolemma. In terms of biological role, regulatory subunit of the voltage-gated calcium channel that gives rise to L-type calcium currents in skeletal muscle. Regulates channel inactivation kinetics. This is Voltage-dependent calcium channel gamma-1 subunit (CACNG1) from Oryctolagus cuniculus (Rabbit).